The primary structure comprises 351 residues: Ca(2+)/H(+) antiporter ChaA (351 aa).

11 helical membrane-spanning segments follow: residues 4–24 (IFFI…LMHW), 25–45 (PSAV…SYMG), 59–79 (IGGL…SLFA), 86–106 (GIVL…VAGL), 130–150 (GLLI…SVGM), 156–176 (LNLS…ALYF), 205–225 (VATI…ENLV), 241–261 (FIGV…SAII), 282–302 (IAMF…TSMP), 303–323 (LVFT…MIAI), and 331–351 (WFEG…FFLL).

Belongs to the Ca(2+):cation antiporter (CaCA) (TC 2.A.19) family. Cation/proton exchanger (CAX) subfamily. As to quaternary structure, homotrimer.

The protein resides in the cell membrane. Its activity is regulated as follows. Calcium efflux is tightly regulated by intracellular pH. Ca(+)/H(+) antiporter that extrudes calcium in exchange for external protons. Does not transport sodium or potassium. This is Ca(2+)/H(+) antiporter ChaA (chaA) from Bacillus subtilis (strain 168).